Here is a 276-residue protein sequence, read N- to C-terminus: Putative glycosyltransferase 6 domain-containing protein 1 (276 aa).

The Cytoplasmic segment spans residues 1–6; that stretch reads MNSKRM. The helical; Signal-anchor for type II membrane protein transmembrane segment at 7-23 threads the bilayer; sequence LLLVLFAFSLMLVERYF. The Lumenal segment spans residues 24 to 276; that stretch reads RNHQVEELRL…NKYFYLNKPT (253 aa). N-linked (GlcNAc...) asparagine glycosylation is present at N74. Residues 82–87, 173–175, and 195–198 contribute to the substrate site; these read FATGRF, AAN, and HAWW. E263 (nucleophile) is an active-site residue.

This sequence belongs to the glycosyltransferase 6 family. The cofactor is Mn(2+). In terms of tissue distribution, expressed in both healthy and inflamed gingival tissue samples at similar levels, with higher expression in the gingival connective tissue compared to gingival epithelium. Strongest expression in testis, followed by leukocytes.

The protein resides in the membrane. The polypeptide is Putative glycosyltransferase 6 domain-containing protein 1 (GLT6D1) (Homo sapiens (Human)).